Consider the following 89-residue polypeptide: Small ribosomal subunit protein uS15 (89 aa).

The protein belongs to the universal ribosomal protein uS15 family. As to quaternary structure, part of the 30S ribosomal subunit. Forms a bridge to the 50S subunit in the 70S ribosome, contacting the 23S rRNA.

Functionally, one of the primary rRNA binding proteins, it binds directly to 16S rRNA where it helps nucleate assembly of the platform of the 30S subunit by binding and bridging several RNA helices of the 16S rRNA. In terms of biological role, forms an intersubunit bridge (bridge B4) with the 23S rRNA of the 50S subunit in the ribosome. The sequence is that of Small ribosomal subunit protein uS15 from Limosilactobacillus fermentum (strain NBRC 3956 / LMG 18251) (Lactobacillus fermentum).